The sequence spans 140 residues: Large ribosomal subunit protein bL17 (140 aa).

This sequence belongs to the bacterial ribosomal protein bL17 family. In terms of assembly, part of the 50S ribosomal subunit. Contacts protein L32.

The polypeptide is Large ribosomal subunit protein bL17 (Paracoccus denitrificans (strain Pd 1222)).